The primary structure comprises 188 residues: Antitoxin SocA (188 aa).

Interacts with cognate toxin SocB and with ClpX.

In terms of biological role, antitoxin component of an atypical type II toxin-antitoxin (TA) system. Unlike most type II TA systems, neutralizes the toxic activity of cognate toxin SocB by acting as an adapter to promote its degradation by ClpXP; degradation is dependent on the N-terminus of ClpX. The sequence is that of Antitoxin SocA from Caulobacter vibrioides (strain NA1000 / CB15N) (Caulobacter crescentus).